Consider the following 342-residue polypeptide: Holliday junction branch migration complex subunit RuvB (342 aa).

The interval 1–184 is large ATPase domain (RuvB-L); the sequence is MEEDFNIRDH…FGINLHLEYY (184 aa). Residues L23, R24, G65, K68, T69, T70, 131 to 133, R174, Y184, and R221 each bind ATP; that span reads EDY. Residue T69 participates in Mg(2+) binding. The small ATPAse domain (RuvB-S) stretch occupies residues 185–255; the sequence is DDDILSNIIS…IANYALEALN (71 aa). The interval 258 to 342 is head domain (RuvB-H); it reads KYGLDEIDNK…YNSQKTLFND (85 aa). Positions 313 and 318 each coordinate DNA.

It belongs to the RuvB family. Homohexamer. Forms an RuvA(8)-RuvB(12)-Holliday junction (HJ) complex. HJ DNA is sandwiched between 2 RuvA tetramers; dsDNA enters through RuvA and exits via RuvB. An RuvB hexamer assembles on each DNA strand where it exits the tetramer. Each RuvB hexamer is contacted by two RuvA subunits (via domain III) on 2 adjacent RuvB subunits; this complex drives branch migration. In the full resolvosome a probable DNA-RuvA(4)-RuvB(12)-RuvC(2) complex forms which resolves the HJ.

The protein resides in the cytoplasm. The enzyme catalyses ATP + H2O = ADP + phosphate + H(+). The RuvA-RuvB-RuvC complex processes Holliday junction (HJ) DNA during genetic recombination and DNA repair, while the RuvA-RuvB complex plays an important role in the rescue of blocked DNA replication forks via replication fork reversal (RFR). RuvA specifically binds to HJ cruciform DNA, conferring on it an open structure. The RuvB hexamer acts as an ATP-dependent pump, pulling dsDNA into and through the RuvAB complex. RuvB forms 2 homohexamers on either side of HJ DNA bound by 1 or 2 RuvA tetramers; 4 subunits per hexamer contact DNA at a time. Coordinated motions by a converter formed by DNA-disengaged RuvB subunits stimulates ATP hydrolysis and nucleotide exchange. Immobilization of the converter enables RuvB to convert the ATP-contained energy into a lever motion, pulling 2 nucleotides of DNA out of the RuvA tetramer per ATP hydrolyzed, thus driving DNA branch migration. The RuvB motors rotate together with the DNA substrate, which together with the progressing nucleotide cycle form the mechanistic basis for DNA recombination by continuous HJ branch migration. Branch migration allows RuvC to scan DNA until it finds its consensus sequence, where it cleaves and resolves cruciform DNA. This chain is Holliday junction branch migration complex subunit RuvB, found in Bacteroides fragilis (strain ATCC 25285 / DSM 2151 / CCUG 4856 / JCM 11019 / LMG 10263 / NCTC 9343 / Onslow / VPI 2553 / EN-2).